Consider the following 519-residue polypeptide: uncharacterized protein (519 aa).

11 helical membrane-spanning segments follow: residues 52–72, 86–106, 119–139, 156–176, 199–219, 231–251, 313–333, 343–363, 374–394, 408–430, and 477–497; these read IYFL…VRGS, LATY…SPIV, TWVV…SYNV, WSFL…GWSL, FFLS…NTFI, LSGY…LVCF, MLSL…VYTG, IWLK…ILVY, VFFP…IQFV, IGGT…PQYV, and TSIV…TPVV.

Its subcellular location is the membrane. This is an uncharacterized protein from Schizosaccharomyces pombe (strain 972 / ATCC 24843) (Fission yeast).